Reading from the N-terminus, the 524-residue chain is Light-independent protochlorophyllide reductase subunit B (524 aa).

Asp-36 is a binding site for [4Fe-4S] cluster. The Proton donor role is filled by Asp-290. 425–426 (GL) provides a ligand contact to substrate.

The protein belongs to the ChlB/BchB/BchZ family. Protochlorophyllide reductase is composed of three subunits; ChlL, ChlN and ChlB. Forms a heterotetramer of two ChlB and two ChlN subunits. Requires [4Fe-4S] cluster as cofactor.

It carries out the reaction chlorophyllide a + oxidized 2[4Fe-4S]-[ferredoxin] + 2 ADP + 2 phosphate = protochlorophyllide a + reduced 2[4Fe-4S]-[ferredoxin] + 2 ATP + 2 H2O. The protein operates within porphyrin-containing compound metabolism; chlorophyll biosynthesis (light-independent). Component of the dark-operative protochlorophyllide reductase (DPOR) that uses Mg-ATP and reduced ferredoxin to reduce ring D of protochlorophyllide (Pchlide) to form chlorophyllide a (Chlide). This reaction is light-independent. The NB-protein (ChlN-ChlB) is the catalytic component of the complex. This chain is Light-independent protochlorophyllide reductase subunit B, found in Parasynechococcus marenigrum (strain WH8102).